Here is a 161-residue protein sequence, read N- to C-terminus: Zinc finger protein KNUCKLES (161 aa).

Positions 1-33 (MAEPPPSYLHFVGPAKTRSSSKRHSFSSSAHPA) are disordered. Residues 38–60 (FPCQYCPRKFYTSQALGGHQNAH) form a C2H2-type zinc finger. The segment at 142-161 (GGNGVMEEDEPLDLDLSLRL) is disordered. Positions 155-159 (LDLSL) match the EAR-like (transcriptional repression) motif.

First expressed in developing carpel primordia, and later in stamens and ovules of flower buds.

It is found in the nucleus. Its function is as follows. May function as a transcriptional repressor of cellular proliferation that regulates floral determinacy and relative size of basal pattern elements along the proximo-distal axis of the developing gynoecium. The polypeptide is Zinc finger protein KNUCKLES (KNU) (Arabidopsis thaliana (Mouse-ear cress)).